The primary structure comprises 226 residues: Lysosomal-associated transmembrane protein 4B (226 aa).

Helical transmembrane passes span 26 to 46, 72 to 92, 100 to 120, and 153 to 173; these read ILLG…LLSA, MCIA…ATYG, WIIP…LVAI, and CLVL…GYLI. The segment at 205 to 221 is required for NEDD4 interaction; sequence PPYDDATVNGAAKEPPP.

It belongs to the LAPTM4/LAPTM5 transporter family. As to quaternary structure, homooligomer; upon reaching the lysosomes. Interacts with MCOLN1. Interacts with NEDD4; may play a role in the lysosomal sorting of LAPTM4B; enhances HGS association with NEDD4; mediates inhibition of EGFR degradation. Interacts with PIP5K1C; promotes SNX5 association with LAPTM4B; kinase activity of PIP5K1C is required; interaction is regulated by phosphatidylinositol 4,5-bisphosphate generated by PIP5K1C. Interacts with HGS; promotes HGS ubiquitination. Interacts with SNX5. Interacts with SLC3A2 and SLC7A5; recruits SLC3A2 and SLC7A5 to lysosomes to promote leucine uptake into these organelles and is required for mTORC1 activation. Interacts with LRRC32; decreases TGFB1 production in regulatory T cells. Interacts with BECN1; competes with EGFR for LAPTM4B binding; regulates EGFR activity. Interacts with EGFR; positively correlates with EGFR activation. Post-translationally, undergoes proteolytic cleavage following delivery to the lysosomes. Ubiquitinated by NEDD4.

It is found in the endomembrane system. Its subcellular location is the late endosome membrane. It localises to the cell membrane. The protein localises to the cell projection. The protein resides in the lysosome membrane. It is found in the endosome membrane. Its subcellular location is the endosome. It localises to the multivesicular body membrane. The protein localises to the multivesicular body lumen. Its function is as follows. Required for optimal lysosomal function. Blocks EGF-stimulated EGFR intraluminal sorting and degradation. Conversely by binding with the phosphatidylinositol 4,5-bisphosphate, regulates its PIP5K1C interaction, inhibits HGS ubiquitination and relieves LAPTM4B inhibition of EGFR degradation. Recruits SLC3A2 and SLC7A5 (the Leu transporter) to the lysosome, promoting entry of leucine and other essential amino acid (EAA) into the lysosome, stimulating activation of proton-transporting vacuolar (V)-ATPase protein pump (V-ATPase) and hence mTORC1 activation. Plays a role as negative regulator of TGFB1 production in regulatory T cells. Binds ceramide and facilitates its exit from late endosome in order to control cell death pathways. The protein is Lysosomal-associated transmembrane protein 4B of Macaca fascicularis (Crab-eating macaque).